The primary structure comprises 401 residues: Tumor necrosis factor receptor superfamily member 11B (401 aa).

A signal peptide spans 1–21 (MNKWLCCALLVFLDIIEWTTQ). TNFR-Cys repeat units follow at residues 24–62 (FPPKYLHYDPETGRQLLCDKCAPGTYLKQHCTVRRKTLC), 65–105 (CPDY…NRVC), 107–142 (CEEGRYLELEFCLKHRSCPPGLGVLQAGTPERNTVC), and 145–185 (CPDG…DNVC). 8 disulfides stabilise this stretch: C41-C54, C44-C62, C65-C80, C83-C97, C87-C105, C107-C118, C124-C142, and C145-C160. N98 carries N-linked (GlcNAc...) asparagine glycosylation. N165 and N178 each carry an N-linked (GlcNAc...) asparagine glycan. C166 and C185 are disulfide-bonded. Death domains follow at residues 198 to 269 (DVTL…MVKK) and 270 to 365 (IIQD…THSL). The N-linked (GlcNAc...) asparagine glycan is linked to N289.

In terms of assembly, homodimer. Interacts with TNFSF10 and TNFSF11.

The protein localises to the secreted. Functionally, acts as a decoy receptor for TNFSF11/RANKL and thereby neutralizes its function in osteoclastogenesis. Inhibits the activation of osteoclasts and promotes osteoclast apoptosis in vitro. Bone homeostasis seems to depend on the local ratio between TNFSF11 and TNFRSF11B. May also play a role in preventing arterial calcification. May act as decoy receptor for TNFSF10/TRAIL and protect against apoptosis. TNFSF10/TRAIL binding blocks the inhibition of osteoclastogenesis. This is Tumor necrosis factor receptor superfamily member 11B (Tnfrsf11b) from Rattus norvegicus (Rat).